We begin with the raw amino-acid sequence, 364 residues long: Pectinesterase 1 (364 aa).

An N-terminal signal peptide occupies residues 1 to 22; it reads MSCIAVEAVLLGILLYIPIVLS. N-linked (GlcNAc...) asparagine glycosylation occurs at Asn103. The active site involves Asp220.

This sequence belongs to the pectinesterase family. Glycosylated. Expressed in pollen.

It localises to the secreted. It carries out the reaction [(1-&gt;4)-alpha-D-galacturonosyl methyl ester](n) + n H2O = [(1-&gt;4)-alpha-D-galacturonosyl](n) + n methanol + n H(+). It functions in the pathway glycan metabolism; pectin degradation; 2-dehydro-3-deoxy-D-gluconate from pectin: step 1/5. Its function is as follows. Catalyzes the demethylesterification of homogalacturonan components of pectin. May be involved in pollen tube development. This chain is Pectinesterase 1, found in Olea europaea (Common olive).